Consider the following 344-residue polypeptide: MNILPRINAIEKTDANHHAIAWWLIGVAALVFIMVVVGGLTRLTESGLSITEWKPVTGALPPMTEEHWQEEFDLYRQIPQYQLVNKGMSLDEFKTIYWWEWSHRFLGRLIGLAFFVPFVFFVVTRRVERALVPRLIFLFVLGGMQGVLGWWMVMSGLTDRTEVSQYRLAAHLGLATLIFGALIWTALDLLNGKSTRLLTGLAKAAAAILALIFLQTILGAFVAGIRAGLIYNTWPLMAGAFIPDGLFAMTPVWHNFFESHLTVQFQHRMTAYLLLLCVVWHWWAARKTAAAPSAGWLAVATFAQACIGIWTVLWVVPIPLGAAHQAGAMVVFGVAVWHVHRLAK.

Helical transmembrane passes span 20-40 (IAWW…VGGL), 104-124 (RFLG…FVVT), 135-155 (LIFL…MVMS), 170-190 (AHLG…LDLL), 205-225 (AAAI…VAGI), 233-253 (TWPL…TPVW), 265-285 (FQHR…WWAA), 296-316 (WLAV…LWVV), and 317-337 (PIPL…VAVW). His267 provides a ligand contact to heme. His324 serves as a coordination point for heme.

Belongs to the COX15/CtaA family. Type 2 subfamily. In terms of assembly, interacts with CtaB. It depends on heme b as a cofactor.

It localises to the cell membrane. The catalysed reaction is Fe(II)-heme o + 2 A + H2O = Fe(II)-heme a + 2 AH2. Its pathway is porphyrin-containing compound metabolism; heme A biosynthesis; heme A from heme O: step 1/1. Its function is as follows. Catalyzes the conversion of heme O to heme A by two successive hydroxylations of the methyl group at C8. The first hydroxylation forms heme I, the second hydroxylation results in an unstable dihydroxymethyl group, which spontaneously dehydrates, resulting in the formyl group of heme A. The chain is Heme A synthase from Parvibaculum lavamentivorans (strain DS-1 / DSM 13023 / NCIMB 13966).